The following is a 150-amino-acid chain: MKVSRHAKILEIINSKDIDTQEELAEELKKMGMNVTQATVSRDIKELKLIKVLGNTGKYKYATINHTESYMSDKLINIFAQTVINVENIDKLIIIKTISGSAPAAAEAIDTLGFDGVAGTIAGDNTIFVMARTNEKAQEITMKLKKIITA.

The protein belongs to the ArgR family.

It localises to the cytoplasm. The protein operates within amino-acid biosynthesis; L-arginine biosynthesis [regulation]. Functionally, regulates arginine biosynthesis genes. This chain is Arginine repressor, found in Clostridium botulinum (strain Okra / Type B1).